The following is a 1056-amino-acid chain: RNA cytidine acetyltransferase (1056 aa).

An ATP-binding site is contributed by 286-295 (GRGKSAALGI). Positions 433-446 (QNNTSGRESTQTAV) are enriched in polar residues. A disordered region spans residues 433 to 463 (QNNTSGRESTQTAVVSRDNKEKDSHLHSQSR). The span at 449–463 (RDNKEKDSHLHSQSR) shows a compositional bias: basic and acidic residues. Residue arginine 475 coordinates ATP. The N-acetyltransferase domain maps to 566–706 (VLLPPIDPKD…VKLRDAKTLP (141 aa)). Acetyl-CoA-binding positions include 638–640 (IAT), 645–651 (ASMGYGS), and asparagine 739. Phosphoserine occurs at positions 1001, 1007, and 1010.

The protein belongs to the RNA cytidine acetyltransferase family. NAT10 subfamily. As to quaternary structure, interacts with TAN1. Associates with 90S pre-ribosomal particles.

It localises to the nucleus. Its subcellular location is the nucleolus. The catalysed reaction is a cytidine in 18S rRNA + acetyl-CoA + ATP + H2O = an N(4)-acetylcytidine in 18S rRNA + ADP + phosphate + CoA + H(+). It catalyses the reaction a cytidine in tRNA + acetyl-CoA + ATP + H2O = an N(4)-acetylcytidine in tRNA + ADP + phosphate + CoA + H(+). Functionally, RNA cytidine acetyltransferase with specificity toward both 18S rRNA and tRNAs. Catalyzes the formation of N(4)-acetylcytidine (ac4C) at positions 1280 and 1773 in 18S rRNA. Required for early nucleolar cleavages of precursor rRNA at sites A0, A1 and A2 during 18S rRNA synthesis. Catalyzes the formation of ac4C at position 12 in serine and leucine tRNAs. Requires the tRNA-binding adapter protein TAN1 for full tRNA acetyltransferase activity but not for 18S rRNA acetylation. The polypeptide is RNA cytidine acetyltransferase (Saccharomyces cerevisiae (strain ATCC 204508 / S288c) (Baker's yeast)).